Here is a 153-residue protein sequence, read N- to C-terminus: Ribosomal RNA large subunit methyltransferase H (153 aa).

Residues L70, G102, and 121–126 each bind S-adenosyl-L-methionine; that span reads LSRMTF.

The protein belongs to the RNA methyltransferase RlmH family. In terms of assembly, homodimer.

It is found in the cytoplasm. The enzyme catalyses pseudouridine(1915) in 23S rRNA + S-adenosyl-L-methionine = N(3)-methylpseudouridine(1915) in 23S rRNA + S-adenosyl-L-homocysteine + H(+). Functionally, specifically methylates the pseudouridine at position 1915 (m3Psi1915) in 23S rRNA. This Geotalea uraniireducens (strain Rf4) (Geobacter uraniireducens) protein is Ribosomal RNA large subunit methyltransferase H.